The sequence spans 391 residues: Nuclear hormone receptor family member nhr-115 (391 aa).

A DNA-binding region (nuclear receptor) is located at residues leucine 5–tyrosine 77. The NR C4-type zinc-finger motif lies at cysteine 8–cysteine 28. The NR C4-type; atypical zinc finger occupies alanine 41–cysteine 65. An NR LBD domain is found at tyrosine 130 to serine 388.

It belongs to the nuclear hormone receptor family.

The protein localises to the nucleus. Functionally, orphan nuclear receptor. This is Nuclear hormone receptor family member nhr-115 (nhr-115) from Caenorhabditis elegans.